A 337-amino-acid polypeptide reads, in one-letter code: Anaerobic sulfite reductase subunit C (337 aa).

Positions 115, 121, 153, 157, 180, 183, 186, 190, 212, 215, 218, and 222 each coordinate [4Fe-4S] cluster. Position 157 (Cys157) interacts with siroheme. 4Fe-4S ferredoxin-type domains lie at 171 to 200 (AKMR…CLAL) and 203 to 232 (GKAV…RKPD).

Belongs to the nitrite and sulfite reductase 4Fe-4S domain family. In terms of assembly, the anaerobic sulfite reductase seems to consist of three subunits. [4Fe-4S] cluster serves as cofactor. The cofactor is siroheme.

The protein resides in the cytoplasm. The catalysed reaction is hydrogen sulfide + 3 NAD(+) + 3 H2O = sulfite + 3 NADH + 4 H(+). It participates in sulfur metabolism; sulfite reduction. Functionally, this enzyme catalyzes the hydrogen sulfide production from sulfite. It is strictly anaerobic. It is regulated by electron acceptors rather than by cysteine. The protein is Anaerobic sulfite reductase subunit C (asrC) of Salmonella typhi.